A 150-amino-acid chain; its full sequence is Cytochrome c oxidase subunit 5A, mitochondrial (150 aa).

The transit peptide at 1-41 (MLGAALRRCAVAATAWAGPRGLLHSAPTPGPAAAIHSVRCY) directs the protein to the mitochondrion. Positions 2–17 (LGAALRRCAVAATAWA) match the SIFI-degron motif. An N6-acetyllysine mark is found at Lys87 and Lys113. Thr141 carries the post-translational modification Phosphothreonine.

The protein belongs to the cytochrome c oxidase subunit 5A family. In terms of assembly, component of the cytochrome c oxidase (complex IV, CIV), a multisubunit enzyme composed of 14 subunits. The complex is composed of a catalytic core of 3 subunits MT-CO1, MT-CO2 and MT-CO3, encoded in the mitochondrial DNA, and 11 supernumerary subunits COX4I, COX5A, COX5B, COX6A, COX6B, COX6C, COX7A, COX7B, COX7C, COX8 and NDUFA4, which are encoded in the nuclear genome. The complex exists as a monomer or a dimer and forms supercomplexes (SCs) in the inner mitochondrial membrane with NADH-ubiquinone oxidoreductase (complex I, CI) and ubiquinol-cytochrome c oxidoreductase (cytochrome b-c1 complex, complex III, CIII), resulting in different assemblies (supercomplex SCI(1)III(2)IV(1) and megacomplex MCI(2)III(2)IV(2)). Interacts with AFG1L. Interacts with RAB5IF. In response to mitochondrial stress, the precursor protein is ubiquitinated by the SIFI complex in the cytoplasm before mitochondrial import, leading to its degradation. Within the SIFI complex, UBR4 initiates ubiquitin chain that are further elongated or branched by KCMF1.

The protein localises to the mitochondrion inner membrane. It participates in energy metabolism; oxidative phosphorylation. In terms of biological role, component of the cytochrome c oxidase, the last enzyme in the mitochondrial electron transport chain which drives oxidative phosphorylation. The respiratory chain contains 3 multisubunit complexes succinate dehydrogenase (complex II, CII), ubiquinol-cytochrome c oxidoreductase (cytochrome b-c1 complex, complex III, CIII) and cytochrome c oxidase (complex IV, CIV), that cooperate to transfer electrons derived from NADH and succinate to molecular oxygen, creating an electrochemical gradient over the inner membrane that drives transmembrane transport and the ATP synthase. Cytochrome c oxidase is the component of the respiratory chain that catalyzes the reduction of oxygen to water. Electrons originating from reduced cytochrome c in the intermembrane space (IMS) are transferred via the dinuclear copper A center (CU(A)) of subunit 2 and heme A of subunit 1 to the active site in subunit 1, a binuclear center (BNC) formed by heme A3 and copper B (CU(B)). The BNC reduces molecular oxygen to 2 water molecules using 4 electrons from cytochrome c in the IMS and 4 protons from the mitochondrial matrix. The chain is Cytochrome c oxidase subunit 5A, mitochondrial (COX5A) from Saimiri sciureus (Common squirrel monkey).